The sequence spans 473 residues: UDP-N-acetylmuramate--L-alanine ligase (473 aa).

114–120 is a binding site for ATP; the sequence is GTHGKTT.

It belongs to the MurCDEF family.

The protein resides in the cytoplasm. The enzyme catalyses UDP-N-acetyl-alpha-D-muramate + L-alanine + ATP = UDP-N-acetyl-alpha-D-muramoyl-L-alanine + ADP + phosphate + H(+). It participates in cell wall biogenesis; peptidoglycan biosynthesis. Functionally, cell wall formation. This Chlorobium luteolum (strain DSM 273 / BCRC 81028 / 2530) (Pelodictyon luteolum) protein is UDP-N-acetylmuramate--L-alanine ligase.